The chain runs to 618 residues: Nuclear RNA export factor 1 (618 aa).

Basic and acidic residues predominate over residues 1 to 15; that stretch reads MADEGKSYNEHDDRV. The segment at 1–113 is disordered; sequence MADEGKSYNE…RGGAGTSQDG (113 aa). Ala2 carries the post-translational modification N-acetylalanine. The interval 2–59 is minor non-specific RNA-binding; it reads ADEGKSYNEHDDRVSFPQRRKKGRGPFRWKCGVGNRRSGRGGSGIRSSRFEEDDGDVA. Positions 2–117 are RNA-binding (RBD); it reads ADEGKSYNEH…GTSQDGTTKN (116 aa). Positions 2 to 197 are interaction with ALYREF/THOC4 and LUZP4; that stretch reads ADEGKSYNEH…IIINSSAPPY (196 aa). Residues 19 to 28 show a composition bias toward basic residues; the sequence is QRRKKGRGPF. The residue at position 41 (Arg41) is an Asymmetric dimethylarginine; alternate. Arg41 is subject to Omega-N-methylarginine; alternate. The major non-specific RNA-binding stretch occupies residues 60 to 117; sequence MNDPQDGPRVRFNPYTTRPNRRRDTWHDRDRIHVTVRRDRAPQERGGAGTSQDGTTKN. The interval 60-117 is RNA binding; sequence MNDPQDGPRVRFNPYTTRPNRRRDTWHDRDRIHVTVRRDRAPQERGGAGTSQDGTTKN. The Nuclear localization signal signature appears at 66 to 99; sequence GPRVRFNPYTTRPNRRRDTWHDRDRIHVTVRRDR. Over residues 81–102 the composition is skewed to basic and acidic residues; that stretch reads RRDTWHDRDRIHVTVRRDRAPQ. The Nuclear export signal motif lies at 82–109; that stretch reads RDTWHDRDRIHVTVRRDRAPQERGGAGT. Residues 118–197 form the RRM domain; it reads WFKITIPYGK…IIINSSAPPY (80 aa). At Tyr125 the chain carries 3'-nitrotyrosine. 4 LRR repeats span residues 265–290, 291–314, 315–342, and 343–370; these read ELLS…QKAP, NLKI…IKGL, KLEE…TIRE, and RFPK…TMLP. The 151-residue stretch at 385–535 folds into the NTF2 domain; it reads LVLHFLQQYY…LCIVNDELFV (151 aa). The TAP-C domain occupies 564–618; sequence QEQQDMLQAFSTQSGMNLEWSQKCLQDNNWDYTRSAQAFTHLKAKGEIPEVAFMK.

It belongs to the NXF family. Heterodimer (via NTF2 domain) with NXT1. The formation of NXF1-NXT1 heterodimers is required for the NXF1-mediated nuclear mRNA export. Forms a complex with RANBP2/NUP358, NXT1 and RANGAP1. Associates with the exon junction complex (EJC). Associates with the transcription/export (TREX) complex. Found in a mRNA complex with UPF3A and UPF3B. Found in a post-splicing complex with RBM8A, UPF1, UPF2, UPF3A, UPF3B and RNPS1. Interacts (via N-terminus) with DHX9 (via N-terminus); this interaction is direct and negatively regulates NXF1-mediated nuclear export of constitutive transport element (CTE)-containing cellular mRNAs. Interacts with FYTTD1/UIF. Interacts with EIF4A3. Interacts with NUP42. Interacts with ALYREF/THOC4. Interacts with CHTOP. Interacts with FRG1 (via N-terminus). Interacts with LUZP4. Interacts with FMR1; the interaction occurs in a mRNA-dependent and polyribosomes-independent manner in the nucleus. Interacts with CPSF6 (via N-terminus); this interaction is direct. Interacts with RBM15. Interacts with RBM15B. Interacts with MCM3AP; this interaction is not mediated by RNA. Interacts with DDX3X (via C-terminus); this interaction may be partly involved in DDX3X nuclear export and in NXF1 localization to stress granules. Interacts with PABPC1/PABP1.

The protein resides in the nucleus. It is found in the nucleoplasm. It localises to the nucleus speckle. Its subcellular location is the nuclear pore complex. The protein localises to the nucleus envelope. The protein resides in the cytoplasm. It is found in the stress granule. In terms of biological role, involved in the nuclear export of mRNA species bearing retroviral constitutive transport elements (CTE) and in the export of mRNA from the nucleus to the cytoplasm (TAP/NFX1 pathway). The NXF1-NXT1 heterodimer is involved in the export of HSP70 mRNA in conjunction with ALYREF/THOC4 and THOC5 components of the TREX complex. ALYREF/THOC4-bound mRNA is thought to be transferred to the NXF1-NXT1 heterodimer for export. Also involved in nuclear export of m6A-containing mRNAs: interaction between SRSF3 and YTHDC1 facilitates m6A-containing mRNA-binding to both SRSF3 and NXF1, promoting mRNA nuclear export. This is Nuclear RNA export factor 1 (Nxf1) from Rattus norvegicus (Rat).